A 323-amino-acid chain; its full sequence is tRNA U34 carboxymethyltransferase (323 aa).

Carboxy-S-adenosyl-L-methionine-binding positions include K91, W105, K110, G130, 152-154 (DPT), 181-182 (IE), M196, Y200, and R315.

Belongs to the class I-like SAM-binding methyltransferase superfamily. CmoB family. In terms of assembly, homotetramer.

It carries out the reaction carboxy-S-adenosyl-L-methionine + 5-hydroxyuridine(34) in tRNA = 5-carboxymethoxyuridine(34) in tRNA + S-adenosyl-L-homocysteine + H(+). Functionally, catalyzes carboxymethyl transfer from carboxy-S-adenosyl-L-methionine (Cx-SAM) to 5-hydroxyuridine (ho5U) to form 5-carboxymethoxyuridine (cmo5U) at position 34 in tRNAs. The sequence is that of tRNA U34 carboxymethyltransferase from Salmonella agona (strain SL483).